The primary structure comprises 501 residues: ATP synthase subunit alpha (501 aa).

169–176 is an ATP binding site; that stretch reads GDRQTGKT.

This sequence belongs to the ATPase alpha/beta chains family. As to quaternary structure, F-type ATPases have 2 components, CF(1) - the catalytic core - and CF(0) - the membrane proton channel. CF(1) has five subunits: alpha(3), beta(3), gamma(1), delta(1), epsilon(1). CF(0) has three main subunits: a(1), b(2) and c(9-12). The alpha and beta chains form an alternating ring which encloses part of the gamma chain. CF(1) is attached to CF(0) by a central stalk formed by the gamma and epsilon chains, while a peripheral stalk is formed by the delta and b chains.

It is found in the cell membrane. It carries out the reaction ATP + H2O + 4 H(+)(in) = ADP + phosphate + 5 H(+)(out). In terms of biological role, produces ATP from ADP in the presence of a proton gradient across the membrane. The alpha chain is a regulatory subunit. This chain is ATP synthase subunit alpha, found in Streptococcus pneumoniae serotype 2 (strain D39 / NCTC 7466).